Here is a 532-residue protein sequence, read N- to C-terminus: Germ cell nuclear acidic-1 protein (532 aa).

A compositionally biased stretch (basic and acidic residues) spans 1 to 10; sequence MPTPFRDLHN. Disordered stretches follow at residues 1 to 50, 84 to 181, and 213 to 253; these read MPTP…EPIS, REAP…GNFE, and YISE…DRKQ. The segment covering 14 to 32 has biased composition (low complexity); the sequence is ASASSYETAWSSSFSSRRS. Basic and acidic residues-rich tracts occupy residues 39–48, 94–107, and 124–133; these read SNLKEIKDEP, LLQK…RDML, and KPKEVKKALK. The segment covering 213-235 has biased composition (acidic residues); it reads YISEESSEEESEEEEEDVDDEEY. A compositionally biased stretch (basic and acidic residues) spans 236–251; it reads RESSPEVEAKISYSDR. Residues 308–398 enclose the SprT-like domain; it reads RRIFSAIPSE…GARCSSVFKS (91 aa). Residues 468–489 form a disordered region; it reads AKPVGPILSNSSKPSPPAPRRI.

It belongs to the serine-aspartate repeat-containing protein (SDr) family. In terms of assembly, interacts with top-2; this interaction allows the resolution of topoisomerase II (top-2) DNA-protein cross-links. Mainly expressed in germ cells and early embryonic, proliferating cells.

Its subcellular location is the chromosome. In terms of biological role, may play a role in DNA-protein cross-links (DPCs) clearance through a SUMO-dependent recruitment to sites of DPCs, ensuring the genomic stability by protecting germ cells and early embryos from various sources of damage. May resolve the topoisomerase II (top-2) DPCs. Limits replication stress and DNA double-strand breaks. The chain is Germ cell nuclear acidic-1 protein from Caenorhabditis elegans.